A 344-amino-acid polypeptide reads, in one-letter code: Probable dual-specificity RNA methyltransferase RlmN (344 aa).

Glutamate 90 serves as the catalytic Proton acceptor. A Radical SAM core domain is found at 96-326 (YKYGNAICIS…VTIRRELGSS (231 aa)). Cysteine 103 and cysteine 331 are oxidised to a cystine. [4Fe-4S] cluster contacts are provided by cysteine 110, cysteine 114, and cysteine 117. Residues 157 to 158 (GE), serine 189, 212 to 214 (SLH), and asparagine 288 contribute to the S-adenosyl-L-methionine site. The active-site S-methylcysteine intermediate is the cysteine 331.

Belongs to the radical SAM superfamily. RlmN family. Requires [4Fe-4S] cluster as cofactor.

The protein resides in the cytoplasm. The catalysed reaction is adenosine(2503) in 23S rRNA + 2 reduced [2Fe-2S]-[ferredoxin] + 2 S-adenosyl-L-methionine = 2-methyladenosine(2503) in 23S rRNA + 5'-deoxyadenosine + L-methionine + 2 oxidized [2Fe-2S]-[ferredoxin] + S-adenosyl-L-homocysteine. The enzyme catalyses adenosine(37) in tRNA + 2 reduced [2Fe-2S]-[ferredoxin] + 2 S-adenosyl-L-methionine = 2-methyladenosine(37) in tRNA + 5'-deoxyadenosine + L-methionine + 2 oxidized [2Fe-2S]-[ferredoxin] + S-adenosyl-L-homocysteine. In terms of biological role, specifically methylates position 2 of adenine 2503 in 23S rRNA and position 2 of adenine 37 in tRNAs. The polypeptide is Probable dual-specificity RNA methyltransferase RlmN (Caldicellulosiruptor saccharolyticus (strain ATCC 43494 / DSM 8903 / Tp8T 6331)).